A 127-amino-acid chain; its full sequence is UPF0166 protein PH1503 (127 aa).

It belongs to the UPF0166 family.

The polypeptide is UPF0166 protein PH1503 (Pyrococcus horikoshii (strain ATCC 700860 / DSM 12428 / JCM 9974 / NBRC 100139 / OT-3)).